The primary structure comprises 114 residues: INGDAKGTVFFEQETSEAPVKVTGEVLGLTKGLHGFHVHEFGDNTNGCMSSGPHFNPRSKEHGAPTDENRHLGDLGNIQAAGDSPTAVSITDSKITLFGADSIIGRTVVVHADA.

Cu cation-binding residues include histidine 37, histidine 39, and histidine 54. A disordered region spans residues 48–76; that stretch reads CMSSGPHFNPRSKEHGAPTDENRHLGDLG. Zn(2+)-binding residues include histidine 54, histidine 62, histidine 71, and aspartate 74. Residues 58–73 are compositionally biased toward basic and acidic residues; sequence RSKEHGAPTDENRHLG. Histidine 111 is a binding site for Cu cation.

This sequence belongs to the Cu-Zn superoxide dismutase family. In terms of assembly, homodimer. Requires Cu cation as cofactor. Zn(2+) is required as a cofactor.

Its subcellular location is the cytoplasm. It carries out the reaction 2 superoxide + 2 H(+) = H2O2 + O2. Destroys radicals which are normally produced within the cells and which are toxic to biological systems. The protein is Superoxide dismutase [Cu-Zn] of Drosophila obscura (Fruit fly).